We begin with the raw amino-acid sequence, 327 residues long: MKRIGLVFCALLLLLGMGARPAAAYPYYAQMAYDNPREATGKIVCANCHLNAMPTRAEVPQAVTPGQVFTIKVGIPYDLSKQQVLADGSKGGLNVGAVVVLPEGFRLATEAEMTEEQRQETAETYITPYSDAKPNILLVGPLPGEQHQEIVFPVVAPDPKEDPSVAFMKYRVYIGANRGRGQLNPDGSLSNNNVFRAPATGRLVNIATLDSDISDLPAELASLVPPEYELPGTRVLSFESESGIHNLVVPPGPELVVAVGDSVKEGDPVTNNPNVGGFGQVERDLVLQSPDRVKWLVAFLAAITITQVLLVLKKKQVELIQAAEILG.

Residues 1 to 24 (MKRIGLVFCALLLLLGMGARPAAA) form the signal peptide. Heme contacts are provided by Tyr25, Cys45, Cys48, and His49. The chain crosses the membrane as a helical span at residues 293-313 (VKWLVAFLAAITITQVLLVLK).

It belongs to the cytochrome f family. As to quaternary structure, the 4 large subunits of the cytochrome b6-f complex are cytochrome b6, subunit IV (17 kDa polypeptide, PetD), cytochrome f and the Rieske protein, while the 4 small subunits are PetG, PetL, PetM and PetN. The complex functions as a dimer. Heme serves as cofactor.

Its subcellular location is the cellular thylakoid membrane. In terms of biological role, component of the cytochrome b6-f complex, which mediates electron transfer between photosystem II (PSII) and photosystem I (PSI), cyclic electron flow around PSI, and state transitions. This Synechococcus sp. (strain JA-2-3B'a(2-13)) (Cyanobacteria bacterium Yellowstone B-Prime) protein is Cytochrome f.